Here is a 129-residue protein sequence, read N- to C-terminus: Lysozyme C, milk isozyme (129 aa).

A C-type lysozyme domain is found at 1–129; the sequence is KVFSKCELAH…LSEYLASCNL (129 aa). Intrachain disulfides connect C6–C127, C30–C115, C65–C80, and C76–C94. Residues E35 and D53 contribute to the active site. The Ca(2+) site is built by K82, D85, N87, D90, and D91.

This sequence belongs to the glycosyl hydrolase 22 family. In terms of assembly, monomer. Ca(2+) is required as a cofactor.

It carries out the reaction Hydrolysis of (1-&gt;4)-beta-linkages between N-acetylmuramic acid and N-acetyl-D-glucosamine residues in a peptidoglycan and between N-acetyl-D-glucosamine residues in chitodextrins.. Its function is as follows. Lysozymes have primarily a bacteriolytic function; those in tissues and body fluids are associated with the monocyte-macrophage system and enhance the activity of immunoagents. In Equus caballus (Horse), this protein is Lysozyme C, milk isozyme (LYZ).